The primary structure comprises 168 residues: Ribosome maturation factor RimM (168 aa).

A PRC barrel domain is found at 94–167 (DGNYYHHQII…KVIIELLDGL (74 aa)).

The protein belongs to the RimM family. Binds ribosomal protein uS19.

It is found in the cytoplasm. In terms of biological role, an accessory protein needed during the final step in the assembly of 30S ribosomal subunit, possibly for assembly of the head region. Essential for efficient processing of 16S rRNA. May be needed both before and after RbfA during the maturation of 16S rRNA. It has affinity for free ribosomal 30S subunits but not for 70S ribosomes. This Ligilactobacillus salivarius (strain UCC118) (Lactobacillus salivarius) protein is Ribosome maturation factor RimM.